A 358-amino-acid chain; its full sequence is Phenylalanine--tRNA ligase alpha subunit (358 aa).

Glutamate 279 contacts Mg(2+).

It belongs to the class-II aminoacyl-tRNA synthetase family. Phe-tRNA synthetase alpha subunit type 1 subfamily. In terms of assembly, tetramer of two alpha and two beta subunits. Mg(2+) is required as a cofactor.

It is found in the cytoplasm. The enzyme catalyses tRNA(Phe) + L-phenylalanine + ATP = L-phenylalanyl-tRNA(Phe) + AMP + diphosphate + H(+). The polypeptide is Phenylalanine--tRNA ligase alpha subunit (Variovorax paradoxus (strain S110)).